Consider the following 239-residue polypeptide: Ribonuclease P protein component 3 (239 aa).

Belongs to the eukaryotic/archaeal RNase P protein component 3 family. In terms of assembly, consists of a catalytic RNA component and at least 4-5 protein subunits.

Its subcellular location is the cytoplasm. The enzyme catalyses Endonucleolytic cleavage of RNA, removing 5'-extranucleotides from tRNA precursor.. Functionally, part of ribonuclease P, a protein complex that generates mature tRNA molecules by cleaving their 5'-ends. This is Ribonuclease P protein component 3 from Methanosarcina mazei (strain ATCC BAA-159 / DSM 3647 / Goe1 / Go1 / JCM 11833 / OCM 88) (Methanosarcina frisia).